A 232-amino-acid polypeptide reads, in one-letter code: Large ribosomal subunit protein uL1 (232 aa).

The protein belongs to the universal ribosomal protein uL1 family. In terms of assembly, part of the 50S ribosomal subunit.

Functionally, binds directly to 23S rRNA. The L1 stalk is quite mobile in the ribosome, and is involved in E site tRNA release. Protein L1 is also a translational repressor protein, it controls the translation of the L11 operon by binding to its mRNA. This chain is Large ribosomal subunit protein uL1, found in Burkholderia lata (strain ATCC 17760 / DSM 23089 / LMG 22485 / NCIMB 9086 / R18194 / 383).